Here is a 76-residue protein sequence, read N- to C-terminus: Small proline-rich protein 2E (76 aa).

Tandem repeats lie at residues 21 to 29 (KKCPEPCPH), 30 to 38 (PQCPEPCPP), and 39 to 47 (PKCPEPCPE). The segment at 21 to 47 (KKCPEPCPHPQCPEPCPPPKCPEPCPE) is 3 X 9 AA approximate tandem repeats. The tract at residues 52–76 (PSYQQKCPPVQPPPPCQQKCPPKSK) is disordered.

Belongs to the cornifin (SPRR) family. In terms of tissue distribution, expressed in uterus.

The protein localises to the cytoplasm. In terms of biological role, cross-linked envelope protein of keratinocytes. It is a keratinocyte protein that first appears in the cell cytosol, but ultimately becomes cross-linked to membrane proteins by transglutaminase. All that results in the formation of an insoluble envelope beneath the plasma membrane. This Mus musculus (Mouse) protein is Small proline-rich protein 2E (Sprr2e).